A 409-amino-acid chain; its full sequence is Aspartate aminotransferase, cytoplasmic (409 aa).

Ser2 carries the N-acetylserine modification. L-aspartate contacts are provided by Gly38, Trp138, and Asn191. N6-(pyridoxal phosphate)lysine is present on Lys255. L-aspartate is bound at residue Arg383. Ser385 is subject to Phosphoserine.

It belongs to the class-I pyridoxal-phosphate-dependent aminotransferase family. As to quaternary structure, homodimer. The cofactor is pyridoxal 5'-phosphate.

It is found in the cytoplasm. It carries out the reaction L-aspartate + 2-oxoglutarate = oxaloacetate + L-glutamate. Functionally, plays a key role in amino acid metabolism. This chain is Aspartate aminotransferase, cytoplasmic, found in Schizosaccharomyces pombe (strain 972 / ATCC 24843) (Fission yeast).